Reading from the N-terminus, the 2210-residue chain is Filamin-A (2210 aa).

2 consecutive Calponin-homology (CH) domains span residues 15 to 120 and 139 to 242; these read KIQQ…LHYS and HTPK…NSKL. 20 Filamin repeats span residues 249–347, 349–447, 448–544, 545–635, 638–734, 735–831, 832–929, 930–1022, 1023–1121, 1122–1217, 1218–1312, 1322–1423, 1424–1515, 1516–1603, 1606–1698, 1699–1796, 1799–1891, 1893–1986, 1988–2079, and 2116–2210; these read RPKT…PVKV, GHAG…PVKV, APLS…EVKV, GPKK…IAQI, RTDF…RVYV, GVPV…VVVE, QTVD…VVNV, KSGC…RVLV, EETV…VMTV, FPKS…KLEA, FPTG…SIKA, SEYI…KFHV, DSIT…FAKI, TGEG…KVTV, REVG…TVKV, AGEG…QFTV, LRDS…KVYV, PDAG…RIKV, KDVA…KVNA, and TFKS…QIDV.

It belongs to the filamin family. As to quaternary structure, interacts with Ten-m. In terms of tissue distribution, germline-specific in females (at protein level). Expressed in ovary.

The protein resides in the cytoplasm. Its subcellular location is the cytoskeleton. It localises to the cell membrane. Functionally, involved in the germline ring canal formation. May tether actin microfilament within the ovarian ring canal to the cell membrane. Contributes to actin microfilaments organization. The polypeptide is Filamin-A (cher) (Drosophila melanogaster (Fruit fly)).